Consider the following 200-residue polypeptide: ATP-dependent Clp protease proteolytic subunit 2 (200 aa).

Ser99 functions as the Nucleophile in the catalytic mechanism. The active site involves His124.

It belongs to the peptidase S14 family. Fourteen ClpP subunits assemble into 2 heptameric rings which stack back to back to give a disk-like structure with a central cavity, resembling the structure of eukaryotic proteasomes.

It localises to the cytoplasm. The enzyme catalyses Hydrolysis of proteins to small peptides in the presence of ATP and magnesium. alpha-casein is the usual test substrate. In the absence of ATP, only oligopeptides shorter than five residues are hydrolyzed (such as succinyl-Leu-Tyr-|-NHMec, and Leu-Tyr-Leu-|-Tyr-Trp, in which cleavage of the -Tyr-|-Leu- and -Tyr-|-Trp bonds also occurs).. Cleaves peptides in various proteins in a process that requires ATP hydrolysis. Has a chymotrypsin-like activity. Plays a major role in the degradation of misfolded proteins. The polypeptide is ATP-dependent Clp protease proteolytic subunit 2 (Treponema denticola (strain ATCC 35405 / DSM 14222 / CIP 103919 / JCM 8153 / KCTC 15104)).